The primary structure comprises 298 residues: tRNA dimethylallyltransferase (298 aa).

16–23 (GPTASGKS) provides a ligand contact to ATP. Substrate is bound at residue 18-23 (TASGKS). Interaction with substrate tRNA regions lie at residues 41–44 (DSMQ) and 165–169 (QRIVR).

This sequence belongs to the IPP transferase family. Monomer. Mg(2+) serves as cofactor.

It catalyses the reaction adenosine(37) in tRNA + dimethylallyl diphosphate = N(6)-dimethylallyladenosine(37) in tRNA + diphosphate. Its function is as follows. Catalyzes the transfer of a dimethylallyl group onto the adenine at position 37 in tRNAs that read codons beginning with uridine, leading to the formation of N6-(dimethylallyl)adenosine (i(6)A). The polypeptide is tRNA dimethylallyltransferase (Rhizobium rhizogenes (strain K84 / ATCC BAA-868) (Agrobacterium radiobacter)).